The sequence spans 279 residues: MLRLRVFDRHKRLWSVLQSTIRGNNISNHIPNTTCRSSAPPHLCARQRAFYSQNSPKTPNPGSSAGIKLRTRLVVTLLFGGGIIGTWWYVHQEKEKRIQMQRLEQLRKVALGQGDFHLLDHTGQRRTKRDFLGHWVLLYFGFTHCPDICPDELEKLTSVVHILDKDPSLPSVQPLFITVDPERDDVSAMARYVKDFHPRLVGLTGSAEEVKQAGRDFRVYASNGPKDEDGDYIVDHSIVIYLVNPDGLFIDYYNRMKNDTQIAESIRNHMKTFVRLFPD.

The helical transmembrane segment at L73–V90 threads the bilayer. Topologically, residues H91–D279 are mitochondrial intermembrane. A Thioredoxin domain is found at R97–K271. 3 residues coordinate Cu cation: C145, C149, and H236. Cysteines 145 and 149 form a disulfide.

This sequence belongs to the SCO1/2 family. Homodimer.

Its subcellular location is the mitochondrion inner membrane. Copper metallochaperone essential for the synthesis and maturation of cytochrome c oxidase subunit II (MT-CO2/COX2) by facilitating the incorporation of copper into the Cu(A) site of MT-CO2/COX2. Could also act as a thiol-disulfide oxidoreductase to regulate the redox state of the cysteines in SCO1 during maturation of MT-CO2/COX2. This Danio rerio (Zebrafish) protein is Protein SCO2 homolog, mitochondrial (sco2).